A 335-amino-acid polypeptide reads, in one-letter code: NADH-quinone oxidoreductase subunit H (335 aa).

8 consecutive transmembrane segments (helical) span residues 12-32 (IIAVVKAIVVLLAVVVCGALL), 81-101 (VIFTLAPVVAMSALLIAFAVI), 114-134 (IGLLFFFAMAGLSVYAVLFAG), 154-174 (VSYEVFMGLALMGIVVQVGSF), 187-207 (LWFIIPQFFGFCTFFIAGVAV), 238-258 (FFVGEYIGIILISALLVTLFF), 270-290 (SLAFFWFALKTAFFIMLFILL), and 307-327 (WKFCLPLTLINLLVTAAIVLL).

This sequence belongs to the complex I subunit 1 family. As to quaternary structure, NDH-1 is composed of 13 different subunits. Subunits NuoA, H, J, K, L, M, N constitute the membrane sector of the complex.

Its subcellular location is the cell inner membrane. It carries out the reaction a quinone + NADH + 5 H(+)(in) = a quinol + NAD(+) + 4 H(+)(out). NDH-1 shuttles electrons from NADH, via FMN and iron-sulfur (Fe-S) centers, to quinones in the respiratory chain. The immediate electron acceptor for the enzyme in this species is believed to be ubiquinone. Couples the redox reaction to proton translocation (for every two electrons transferred, four hydrogen ions are translocated across the cytoplasmic membrane), and thus conserves the redox energy in a proton gradient. This subunit may bind ubiquinone. The sequence is that of NADH-quinone oxidoreductase subunit H from Pseudomonas syringae pv. syringae (strain B728a).